Reading from the N-terminus, the 185-residue chain is Ribosome-recycling factor (185 aa).

Belongs to the RRF family.

The protein resides in the cytoplasm. Responsible for the release of ribosomes from messenger RNA at the termination of protein biosynthesis. May increase the efficiency of translation by recycling ribosomes from one round of translation to another. The polypeptide is Ribosome-recycling factor (Buchnera aphidicola subsp. Acyrthosiphon pisum (strain APS) (Acyrthosiphon pisum symbiotic bacterium)).